The primary structure comprises 84 residues: Large ribosomal subunit protein bL31B (84 aa).

Belongs to the bacterial ribosomal protein bL31 family. Type B subfamily. Part of the 50S ribosomal subunit.

Binds the 23S rRNA. The polypeptide is Large ribosomal subunit protein bL31B (Rhodococcus jostii (strain RHA1)).